We begin with the raw amino-acid sequence, 133 residues long: Small ribosomal subunit protein uS19 (133 aa).

It belongs to the universal ribosomal protein uS19 family.

Protein S19 forms a complex with S13 that binds strongly to the 16S ribosomal RNA. The polypeptide is Small ribosomal subunit protein uS19 (rps19) (Archaeoglobus fulgidus (strain ATCC 49558 / DSM 4304 / JCM 9628 / NBRC 100126 / VC-16)).